The following is a 165-amino-acid chain: Molybdopterin synthase catalytic subunit (165 aa).

Substrate-binding positions include 42 to 44 (WVR), 109 to 110 (HR), lysine 125, and 132 to 134 (KLE).

Belongs to the MoaE family. Heterotetramer of 2 MoaD subunits and 2 MoaE subunits. Also stable as homodimer. The enzyme changes between these two forms during catalysis.

The catalysed reaction is 2 [molybdopterin-synthase sulfur-carrier protein]-C-terminal-Gly-aminoethanethioate + cyclic pyranopterin phosphate + H2O = molybdopterin + 2 [molybdopterin-synthase sulfur-carrier protein]-C-terminal Gly-Gly + 2 H(+). It functions in the pathway cofactor biosynthesis; molybdopterin biosynthesis. Its function is as follows. Converts molybdopterin precursor Z into molybdopterin. This requires the incorporation of two sulfur atoms into precursor Z to generate a dithiolene group. The sulfur is provided by MoaD. This chain is Molybdopterin synthase catalytic subunit (moaE), found in Synechococcus elongatus (strain ATCC 33912 / PCC 7942 / FACHB-805) (Anacystis nidulans R2).